Here is a 355-residue protein sequence, read N- to C-terminus: Putative L-lysine 2,3-aminomutase (355 aa).

Residues 93–308 form the Radical SAM core domain; it reads VHQYANRVLM…KERLSGLSLP (216 aa). The [4Fe-4S] cluster site is built by C108, C112, and C115. K320 carries the N6-(pyridoxal phosphate)lysine modification.

It belongs to the radical SAM superfamily. KamA family. It depends on [4Fe-4S] cluster as a cofactor. Requires pyridoxal 5'-phosphate as cofactor.

The protein is Putative L-lysine 2,3-aminomutase of Treponema pallidum (strain Nichols).